The sequence spans 208 residues: Small ribosomal subunit protein eS1 (208 aa).

This sequence belongs to the eukaryotic ribosomal protein eS1 family.

This chain is Small ribosomal subunit protein eS1, found in Saccharolobus solfataricus (strain ATCC 35092 / DSM 1617 / JCM 11322 / P2) (Sulfolobus solfataricus).